The sequence spans 78 residues: Putative defensin-like protein 202 (78 aa).

An N-terminal signal peptide occupies residues 1–29 (MAKTQNFVCFTAVLLILILVSTEIPMIEG). 3 cysteine pairs are disulfide-bonded: cysteine 44/cysteine 65, cysteine 49/cysteine 74, and cysteine 53/cysteine 76.

The protein belongs to the DEFL family.

It localises to the secreted. The protein is Putative defensin-like protein 202 of Arabidopsis thaliana (Mouse-ear cress).